We begin with the raw amino-acid sequence, 114 residues long: Cytochrome c oxidase subunit 7A2-like, mitochondrial (114 aa).

Residues 1 to 55 (MYYKFSGFTQKLAGAWASDAYSPQGLRPVVSTEAPPIIFATPTKLSSGPTAYDYA) constitute a mitochondrion transit peptide. Position 69 is an N6-acetyllysine (lysine 69). The helical transmembrane segment at 82-107 (PDQMLYRTTMALTVGGTIYCLIALYM) threads the bilayer.

It belongs to the cytochrome c oxidase VIIa family. Interacts with the mitochondrial respiratory complexes III (CIII) and IV (CIV), promoting their association.

The protein resides in the mitochondrion inner membrane. In terms of biological role, assembly factor that mediates the formation of some mitochondrial respiratory supercomplexes (respirasomes), thereby promoting oxidative phosphorylation and energy metabolism. Acts as a molecular adapter that associates with both mitochondrial respiratory complexes III (CIII) and IV (CIV), promoting their association. Mediates the formation of various mitochondrial respiratory supercomplexes, such as MCIII(2)IV(2), composed of two CIII and two CIV, and the CS-respirasome (MCI(1)III(2)IV(2)), composed of one CI, two CIII and two CIV. Not involved in the formation of the canonical respirasome (MCI(1)III(2)IV(1)), composed of one CI, two CIII and one CIV. The formation of different respirasomes is important for cell adaptation to oxygen conditions and prevent metabolic exhaustion: supercomplexes mediated by COX7A2L/SCAF1 are required to maintain oxidative phosphorylation upon low oxygen conditions and promote metabolic rewiring toward glycolysis. The protein is Cytochrome c oxidase subunit 7A2-like, mitochondrial of Bos taurus (Bovine).